A 615-amino-acid polypeptide reads, in one-letter code: Protein PSK SIMULATOR 2 (615 aa).

The N-myristoyl glycine moiety is linked to residue G2. Residues 16 to 27 (KKLRSNDDDKSR) show a composition bias toward basic and acidic residues. 2 disordered regions span residues 16-59 (KKLR…KSSK) and 506-529 (AHGV…SNTQ). The segment covering 42–52 (SDSYYSDNYGG) has biased composition (low complexity). The segment covering 512–529 (QETNHVSPPNNRTISNTQ) has biased composition (polar residues).

It is found in the nucleus. In terms of biological role, promotes seedling growth probably via the regulation of phytosulfokine (PSK) signaling; PSK are peptide phytohormones acting as growth factors. Involved in PSK-induced root growth. Together with PSI1 and PSI3, required during vegetative growth and reproduction. The protein is Protein PSK SIMULATOR 2 of Arabidopsis thaliana (Mouse-ear cress).